The chain runs to 204 residues: dITP/XTP pyrophosphatase (204 aa).

14–19 (THNKGK) lines the substrate pocket. Mg(2+) contacts are provided by glutamate 46 and aspartate 75. The Proton acceptor role is filled by aspartate 75. Residues serine 76, 161–164 (FGYD), lysine 184, and 189–190 (HR) each bind substrate.

This sequence belongs to the HAM1 NTPase family. In terms of assembly, homodimer. Mg(2+) serves as cofactor.

It catalyses the reaction XTP + H2O = XMP + diphosphate + H(+). It carries out the reaction dITP + H2O = dIMP + diphosphate + H(+). The enzyme catalyses ITP + H2O = IMP + diphosphate + H(+). Its function is as follows. Pyrophosphatase that catalyzes the hydrolysis of nucleoside triphosphates to their monophosphate derivatives, with a high preference for the non-canonical purine nucleotides XTP (xanthosine triphosphate), dITP (deoxyinosine triphosphate) and ITP. Seems to function as a house-cleaning enzyme that removes non-canonical purine nucleotides from the nucleotide pool, thus preventing their incorporation into DNA/RNA and avoiding chromosomal lesions. This chain is dITP/XTP pyrophosphatase, found in Ruegeria pomeroyi (strain ATCC 700808 / DSM 15171 / DSS-3) (Silicibacter pomeroyi).